The sequence spans 327 residues: MKLNWETTLLILLVLEILLFGAINPRMLDINMLLFSTSDFICIGIVALPLTLVIISGGIDISLGSTIGLCAIALGVMMQFGLPMYLAVPLTLLLGLLCGLFNAALIHYTGISPLVITLGTLYLYGGGALLLSGLAGATGYEGIGGFPDSFTAFANLTVLGLPIPLVLFAVITFFFWLITHRGRFGRHLFLIGQNPRAARYAALSVNGMPYALYGLVGVASAIAALVMVSYFGSARSDLGRDLLMPALTAAVLGGANIYGGSGSVIGTALAALLVGYLQQGLQMVGIPNQVSSALSGALLVVVVMGRSLSLHREWVRNFFTKHTRSLR.

The next 9 helical transmembrane spans lie at 3-23, 41-61, 63-83, 86-106, 114-134, 158-178, 211-231, 257-277, and 283-303; these read LNWETTLLILLVLEILLFGAI, ICIGIVALPLTLVIISGGIDI, LGSTIGLCAIALGVMMQFGLP, LAVPLTLLLGLLCGLFNAALI, LVITLGTLYLYGGGALLLSGL, VLGLPIPLVLFAVITFFFWLI, ALYGLVGVASAIAALVMVSYF, IYGGSGSVIGTALAALLVGYL, and MVGIPNQVSSALSGALLVVVV.

It belongs to the binding-protein-dependent transport system permease family. AraH/RbsC subfamily. In terms of assembly, the complex is composed of two ATP-binding proteins (LsrA), two transmembrane proteins (LsrC and LsrD) and a solute-binding protein (LsrB).

The protein resides in the cell inner membrane. In terms of biological role, part of the ABC transporter complex LsrABCD involved in autoinducer 2 (AI-2) import. Probably responsible for the translocation of the substrate across the membrane. The protein is Autoinducer 2 import system permease protein LsrD (lsrD) of Enterobacter sp. (strain 638).